Reading from the N-terminus, the 281-residue chain is Protein DOG1-like 1 (281 aa).

Residues 9 to 265 enclose the DOG1 domain; it reads EKLQQDCYNE…HEWGKSREHR (257 aa). The segment at 262-281 is disordered; the sequence is REHRRLEASGGDSGGNVTRE.

This Arabidopsis thaliana (Mouse-ear cress) protein is Protein DOG1-like 1.